We begin with the raw amino-acid sequence, 164 residues long: MGVTAIYPGTFDPITHGHTDLIQRGARLFDRLIVGVAANPSPSKAPAFAVEERLELARTALAGIDNVEVEAFTSLLVDFVAHHEAQVIVRGLRAVSDFEYEFQLASMNRQLRADVETVFLTPAEQYAFISSSLVREVAALGGDVSRFVHPAVAEALRNRVRRVP.

T10 contacts substrate. ATP contacts are provided by residues 10 to 11 (TF) and H18. The substrate site is built by K44, L76, and R90. ATP is bound by residues 91-93 (GLR), E101, and 126-132 (YAFISSS).

This sequence belongs to the bacterial CoaD family. As to quaternary structure, homohexamer. Requires Mg(2+) as cofactor.

It is found in the cytoplasm. The catalysed reaction is (R)-4'-phosphopantetheine + ATP + H(+) = 3'-dephospho-CoA + diphosphate. It functions in the pathway cofactor biosynthesis; coenzyme A biosynthesis; CoA from (R)-pantothenate: step 4/5. Functionally, reversibly transfers an adenylyl group from ATP to 4'-phosphopantetheine, yielding dephospho-CoA (dPCoA) and pyrophosphate. The chain is Phosphopantetheine adenylyltransferase from Halorhodospira halophila (strain DSM 244 / SL1) (Ectothiorhodospira halophila (strain DSM 244 / SL1)).